A 307-amino-acid polypeptide reads, in one-letter code: Hepatitis A virus cellular receptor 1 homolog (307 aa).

The N-terminal stretch at 1–21 is a signal peptide; sequence MVQLQVFISGLLLLLPGSVDS. Residues 22–124 form the Ig-like V-type domain; sequence YEVVKGVVGH…WFNDQKMTFS (103 aa). Over 22-235 the chain is Extracellular; that stretch reads YEVVKGVVGH…RKPQRNPTKG (214 aa). Intrachain disulfides connect Cys37–Cys108, Cys49–Cys60, and Cys55–Cys107. A disordered region spans residues 129-177; the sequence is PEIPTSPPTRPTTTRPTTTRPTTISTRSTHVPTSTRVSTSTPTPEQTQT. Residues 139–175 show a composition bias toward low complexity; that stretch reads PTTTRPTTTRPTTISTRSTHVPTSTRVSTSTPTPEQT. A glycan (N-linked (GlcNAc...) asparagine) is linked at Asn206. Residues 236–256 form a helical membrane-spanning segment; that stretch reads FYVGMSVAALLLLLLASTVVV. At 257-307 the chain is on the cytoplasmic side; the sequence is TRYIIIRKKMGSLSFVAFHVSKSRALQNAAIVHPRAEDNIYIIEDRSRGAE.

This sequence belongs to the immunoglobulin superfamily. TIM family. Interacts with STAM. Interacts with SELPLG. As to expression, expressed at a low level in normal kidney but are increased dramatically in postischemic kidney. Expressed in proliferating bromodeoxyuridine-positive and dedifferentiated vimentin-positive epithelial cells in regenerating proximal tubules.

It localises to the cell membrane. In terms of biological role, phosphatidylserine receptor that plays an important functional role in regulatory B-cells homeostasis including generation, expansion and suppressor functions. As P-selectin/SELPLG ligand, plays a specialized role in activated but not naive T-cell trafficking during inflammatory responses. Controls thereby T-cell accumulation in the inflamed central nervous system (CNS) and the induction of autoimmune disease. Also regulates expression of various anti-inflammatory cytokines and co-inhibitory ligands including IL10. Acts as a regulator of T-cell proliferation. May play a role in kidney injury and repair. This Rattus norvegicus (Rat) protein is Hepatitis A virus cellular receptor 1 homolog (Havcr1).